Reading from the N-terminus, the 150-residue chain is Truncated transcription factor CAULIFLOWER A (150 aa).

An MADS-box domain is found at Met-1 to Ser-61. The region spanning Gln-90–His-150 is the K-box; partial domain.

In terms of assembly, homodimer capable of binding to CArG-box sequences. In terms of tissue distribution, expressed in some of the meristems of arrest-stage cauliflower heads.

Its subcellular location is the nucleus. Probable transcription factor that promotes early floral meristem identity in synergy with APETALA1, FRUITFULL and LEAFY. Is required subsequently for the transition of an inflorescence meristem into a floral meristem. Seems to be partially redundant to the function of APETALA1. The chain is Truncated transcription factor CAULIFLOWER A (CAL-A) from Brassica oleracea var. botrytis (Cauliflower).